Reading from the N-terminus, the 131-residue chain is Small ribosomal subunit protein uS8 (131 aa).

The protein belongs to the universal ribosomal protein uS8 family. As to quaternary structure, part of the 30S ribosomal subunit. Contacts proteins S5 and S12.

One of the primary rRNA binding proteins, it binds directly to 16S rRNA central domain where it helps coordinate assembly of the platform of the 30S subunit. In Campylobacter jejuni subsp. jejuni serotype O:23/36 (strain 81-176), this protein is Small ribosomal subunit protein uS8.